The chain runs to 299 residues: Cytosolic sulfotransferase 1 (299 aa).

3'-phosphoadenylyl sulfate is bound at residue 51 to 56 (KAGTTW). His113 functions as the Proton acceptor in the catalytic mechanism. Residues Arg135, Ser143, Tyr199, 233–238 (VQFDAM), and 261–263 (RKG) contribute to the 3'-phosphoadenylyl sulfate site.

It belongs to the sulfotransferase 1 family. As to expression, expressed in liver.

Its subcellular location is the cytoplasm. Its activity is regulated as follows. Inhibited by Co(2+), Zn(2+), Cd(2+) and Pb(2+) ions. Inactivated by Hg(2+) and Cu(2+) ions. Its function is as follows. Sulfotransferase that utilizes 3'-phospho-5'-adenylyl sulfate (PAPS) as sulfonate donor to catalyze the sulfate conjugation of a variety of xenobiotic and endogenous compounds, including 2-naphthol, hydroxychlorobiphenyls, dopamine and T3 (triiodo-L-thyronine). This Danio rerio (Zebrafish) protein is Cytosolic sulfotransferase 1.